A 639-amino-acid polypeptide reads, in one-letter code: Chaperone protein DnaK (639 aa).

The residue at position 198 (T198) is a Phosphothreonine; by autocatalysis. Over residues 603-618 (AKAQTQGGAQEGAAKQ) the composition is skewed to low complexity. The interval 603–639 (AKAQTQGGAQEGAAKQSNATADDVVDAEFEEVKDDKK) is disordered. A compositionally biased stretch (acidic residues) spans 625-639 (DVVDAEFEEVKDDKK).

This sequence belongs to the heat shock protein 70 family.

Its function is as follows. Acts as a chaperone. In Shewanella sp. (strain MR-7), this protein is Chaperone protein DnaK.